The chain runs to 387 residues: 3-ketoacyl-CoA thiolase FadA (387 aa).

C91 serves as the catalytic Acyl-thioester intermediate. Residues H343 and C373 each act as proton acceptor in the active site.

It belongs to the thiolase-like superfamily. Thiolase family. As to quaternary structure, heterotetramer of two alpha chains (FadB) and two beta chains (FadA).

The protein localises to the cytoplasm. It carries out the reaction an acyl-CoA + acetyl-CoA = a 3-oxoacyl-CoA + CoA. It functions in the pathway lipid metabolism; fatty acid beta-oxidation. Its function is as follows. Catalyzes the final step of fatty acid oxidation in which acetyl-CoA is released and the CoA ester of a fatty acid two carbons shorter is formed. Involved in the aerobic and anaerobic degradation of long-chain fatty acids. This Escherichia coli (strain K12) protein is 3-ketoacyl-CoA thiolase FadA (fadA).